We begin with the raw amino-acid sequence, 142 residues long: Transcriptional regulator MraZ (142 aa).

SpoVT-AbrB domains follow at residues Thr5–Glu47 and Ala76–Ala119.

It belongs to the MraZ family. In terms of assembly, forms oligomers.

It localises to the cytoplasm. It is found in the nucleoid. This Arthrobacter sp. (strain FB24) protein is Transcriptional regulator MraZ.